The following is a 216-amino-acid chain: Thiopurine S-methyltransferase (216 aa).

Residues tryptophan 11, leucine 46, glutamate 67, and arginine 122 each contribute to the S-adenosyl-L-methionine site.

Belongs to the class I-like SAM-binding methyltransferase superfamily. TPMT family.

Its subcellular location is the cytoplasm. It catalyses the reaction S-adenosyl-L-methionine + a thiopurine = S-adenosyl-L-homocysteine + a thiopurine S-methylether.. The protein is Thiopurine S-methyltransferase of Vibrio parahaemolyticus serotype O3:K6 (strain RIMD 2210633).